Consider the following 138-residue polypeptide: Ribonuclease VapC21 (138 aa).

The 123-residue stretch at 6–128 folds into the PINc domain; that stretch reads LLDKSAAYRA…ERIAAITRQP (123 aa). Residues D8 and D97 each contribute to the Mg(2+) site.

Belongs to the PINc/VapC protein family. The cofactor is Mg(2+).

Toxic component of a type II toxin-antitoxin (TA) system. An RNase. Its toxic effect is neutralized by coexpression with cognate antitoxin VapB21. This Mycobacterium tuberculosis (strain CDC 1551 / Oshkosh) protein is Ribonuclease VapC21.